The following is a 723-amino-acid chain: Probable dipeptidyl-peptidase 5 (723 aa).

Residues 1 to 19 (MAALRWLSAVVAVSTTVLA) form the signal peptide. N-linked (GlcNAc...) asparagine glycosylation is found at N79, N97, N154, N255, N381, and N451. The Charge relay system role is filled by S561. N-linked (GlcNAc...) asparagine glycosylation is present at N608. Catalysis depends on charge relay system residues D644 and H676.

The protein belongs to the peptidase S9C family.

The protein resides in the secreted. Its function is as follows. Extracellular dipeptidyl-peptidase which removes N-terminal dipeptides sequentially from polypeptides having unsubstituted N-termini. The sequence is that of Probable dipeptidyl-peptidase 5 (dpp5) from Aspergillus terreus (strain NIH 2624 / FGSC A1156).